The chain runs to 417 residues: Exodeoxyribonuclease 7 large subunit (417 aa).

This sequence belongs to the XseA family. In terms of assembly, heterooligomer composed of large and small subunits.

It is found in the cytoplasm. It carries out the reaction Exonucleolytic cleavage in either 5'- to 3'- or 3'- to 5'-direction to yield nucleoside 5'-phosphates.. Functionally, bidirectionally degrades single-stranded DNA into large acid-insoluble oligonucleotides, which are then degraded further into small acid-soluble oligonucleotides. The polypeptide is Exodeoxyribonuclease 7 large subunit (Lactococcus lactis subsp. lactis (strain IL1403) (Streptococcus lactis)).